The chain runs to 398 residues: MKFTLISSCVALACMALAVEAAPSGKKINVPLSKNANYKPNAKRAIEKANAKYARFRSSSSSSSSSSCGSAGTESSGSVPVTDDGNDIEYYGEVTVGTPGIKLKLDFDTGSSDLWFASTLCTNCGSSQTKYDPSQSSTYAKDGRTWSISYGDGSSASGILGKDTVNLGGLKIKNQIIELAKREASSFSSGPSDGLLGLGFDSITTVSGVQTPMDNLISQGLISNPVFGVYLGKESNGGGGEYIFGGYDSSKFSGDLTTIAVDNSNGWYGITIDGASISGSQVSDSFSAILDTGTTLLILPSNVASSVAQAYNANDNGDGTYNINCDTSELQPLVFTIGGSTFEVPTDSLIFEQDGNTCVAGFGYGQDDFAIFGDVFLKNNYVVFNPQVPQVQIAPISN.

An N-terminal signal peptide occupies residues 1–21 (MKFTLISSCVALACMALAVEA). Residues 22-74 (APSGKKINVPLSKNANYKPNAKRAIEKANAKYARFRSSSSSSSSSSCGSAGTE) constitute a propeptide, activation peptide. The segment covering 58–78 (SSSSSSSSSSCGSAGTESSGS) has biased composition (low complexity). The disordered stretch occupies residues 58-83 (SSSSSSSSSSCGSAGTESSGSVPVTD). Positions 90–394 (YYGEVTVGTP…NPQVPQVQIA (305 aa)) constitute a Peptidase A1 domain. Asp-108 is an active-site residue. Cysteines 121 and 124 form a disulfide. The active site involves Asp-291. Residues Cys-325 and Cys-358 are joined by a disulfide bond.

It belongs to the peptidase A1 family.

It carries out the reaction Hydrolysis of proteins with broad specificity similar to that of pepsin A, preferring hydrophobic residues at P1 and P1'. Clots milk and activates trypsinogen. Does not cleave 4-Gln-|-His-5, but does cleave 10-His-|-Leu-11 and 12-Val-|-Glu-13 in B chain of insulin.. The chain is Rhizopuspepsin-4 from Rhizopus niveus.